Here is a 528-residue protein sequence, read N- to C-terminus: Keratin, type II cytoskeletal 78 (528 aa).

The interval 1–104 (MSLSPCRARR…DPQFQVVRTQ (104 aa)) is head. Residues 23 to 45 (VGRGRTGFSSRSLSSFGGCRGGS) are disordered. A compositionally biased stretch (low complexity) spans 24–39 (GRGRTGFSSRSLSSFG). The coil 1A stretch occupies residues 105 to 140 (ETQQIRVLNNQFASFIDKVRFLEQQNKVLETKWHLL). The IF rod domain occupies 105-418 (ETQQIRVLNN…RLLEGEECRM (314 aa)). The interval 141–159 (QQQGLSDRPQGLESFFEAY) is linker 1. Positions 160-252 (LVRLRTQLEE…LYEEELGQLQ (93 aa)) are coil 1B. Residues 253–275 (TQASDMSVVLSMDNNRCLDFRDL) are linker 12. A coil 2 region spans residues 276 to 415 (IAEVRARYEE…TYRRLLEGEE (140 aa)). Residues 416-528 (CRMSGECASQ…ESSLKTSVTY (113 aa)) are tail.

The protein belongs to the intermediate filament family. As to quaternary structure, heterotetramer of two type I and two type II keratins.

This is Keratin, type II cytoskeletal 78 (KRT78) from Bos taurus (Bovine).